The sequence spans 147 residues: Cytochrome c-type biogenesis protein CcmE (147 aa).

Topologically, residues 1–7 (MKPRHKR) are cytoplasmic. Residues 8 to 28 (AAIIAGGLAALGIAAYLVLNA) traverse the membrane as a helical; Signal-anchor for type II membrane protein segment. The Periplasmic segment spans residues 29 to 147 (FQSNLVFFFS…QIQKTIKSLK (119 aa)). Residues H121 and Y125 each coordinate heme.

The protein belongs to the CcmE/CycJ family.

The protein localises to the cell inner membrane. Heme chaperone required for the biogenesis of c-type cytochromes. Transiently binds heme delivered by CcmC and transfers the heme to apo-cytochromes in a process facilitated by CcmF and CcmH. The chain is Cytochrome c-type biogenesis protein CcmE from Albidiferax ferrireducens (strain ATCC BAA-621 / DSM 15236 / T118) (Rhodoferax ferrireducens).